Consider the following 79-residue polypeptide: Putative membrane protein insertion efficiency factor (79 aa).

It belongs to the UPF0161 family.

Its subcellular location is the cell inner membrane. Functionally, could be involved in insertion of integral membrane proteins into the membrane. The protein is Putative membrane protein insertion efficiency factor of Synechocystis sp. (strain ATCC 27184 / PCC 6803 / Kazusa).